Reading from the N-terminus, the 307-residue chain is Olfactory receptor 13G1 (307 aa).

At 1–22 (MNHSVVTEFIILGLTKKPELQG) the chain is on the extracellular side. A glycan (N-linked (GlcNAc...) asparagine) is linked at Asn-2. Residues 23–43 (IIFLFFLIVYLVAFLGNMLII) form a helical membrane-spanning segment. Residues 44–51 (IAKIYNNT) lie on the Cytoplasmic side of the membrane. The chain crosses the membrane as a helical span at residues 52–72 (LHTPMYVFLLTLAVVDIICTT). Over 73–96 (SIIPKMLGTMLTSENTISYAGCMS) the chain is Extracellular. Cys-94 and Cys-186 are oxidised to a cystine. A helical membrane pass occupies residues 97 to 117 (QLFLFTWSLGAEMVLFTTMAY). Residues 118–136 (DRYVAICFPLHYSTIMNHH) are Cytoplasmic-facing. A helical membrane pass occupies residues 137–157 (MCVALLSMVMAIAVTNSWVHT). The Extracellular segment spans residues 158–194 (ALIMRLTFCGPNTIDHFFCEIPPLLALSCSPVRINEV). Residues 195–214 (MVYVADITLAIGDFILTCIS) traverse the membrane as a helical segment. At 215 to 234 (YGFIIVAILRIRTVEGKRKA) the chain is on the cytoplasmic side. The helical transmembrane segment at 235 to 255 (FSTCSSHLTVVTLYYSPVIYT) threads the bilayer. The Extracellular portion of the chain corresponds to 256–268 (YIRPASSYTFERD). The chain crosses the membrane as a helical span at residues 269–289 (KVVAALYTLVTPTLNPMVYSF). Residues 290-307 (QNREMQAGIRKVFAFLKH) lie on the Cytoplasmic side of the membrane.

It belongs to the G-protein coupled receptor 1 family.

It localises to the cell membrane. Its function is as follows. Odorant receptor. This Homo sapiens (Human) protein is Olfactory receptor 13G1 (OR13G1).